A 433-amino-acid polypeptide reads, in one-letter code: Schlafen-like protein 2 (433 aa).

The region spanning 1 to 168 (MADTSPRESK…LSVNFGSQPF (168 aa)) is the B30.2/SPRY domain. Residues 199–400 (EHVVVKLPFA…RRMASNKCVY (202 aa)) are SLFN-like fold. Catalysis depends on residues E211 and E216.

It belongs to the Schlafen family. In terms of assembly, component of the trimeric PUCH (precursor of 21U RNA 5'-end cleavage holoenzyme) complex; consisting of tofu-1, tofu-2 and either slfl-3 or slfl-4. Within the complex, interacts (via N-terminus) with tofu-1 (via N-terminus); the interaction stabilizes tofu-2 and may form a functional nuclease. Within the complex, interacts (via N-terminus) with slfl-3 (via N-terminus); the presence of tofu-1 is required for this interaction. The cofactor is Mg(2+). As to expression, expressed in the germline.

The protein localises to the cytoplasm. It localises to the mitochondrion. Inhibited by ethylenediaminetetraacetic acid (EDTA). Component of the trimeric PUCH (precursor of 21U RNA 5'-end cleavage holoenzyme) complex, that acts as an endoribonuclease processing the 5'-end of precursor Piwi-interacting RNAs (piRNAs). The PUCH complex consists of tofu-1, tofu-2 and either slfl-3 or slfl-4, with tofu-2 exhibiting endoribonuclease activity. PUCH-mediated processing strictly requires a 7-methyl-G cap (m7 G-cap) and an uracil at position three (U3). PUCH also exhibits a strict bias for piRNA precursors with an A or G at position 1. Mature piRNA production is enhanced by the interaction of PUCH with the PETISCO complex, which is stabilizing piRNA precursors and allows their processing by PUCH. The sequence is that of Schlafen-like protein 2 from Caenorhabditis elegans.